The chain runs to 129 residues: Glycine cleavage system H protein (129 aa).

The Lipoyl-binding domain occupies threonine 24 to lysine 106. Lysine 65 carries the post-translational modification N6-lipoyllysine.

Belongs to the GcvH family. In terms of assembly, the glycine cleavage system is composed of four proteins: P, T, L and H. (R)-lipoate is required as a cofactor.

In terms of biological role, the glycine cleavage system catalyzes the degradation of glycine. The H protein shuttles the methylamine group of glycine from the P protein to the T protein. The polypeptide is Glycine cleavage system H protein (Pseudoalteromonas translucida (strain TAC 125)).